Reading from the N-terminus, the 116-residue chain is uncharacterized protein (116 aa).

This is an uncharacterized protein from Saccharolobus islandicus (Sulfolobus islandicus).